Consider the following 414-residue polypeptide: L-cysteine:1D-myo-inositol 2-amino-2-deoxy-alpha-D-glucopyranoside ligase (414 aa).

Residue cysteine 44 participates in Zn(2+) binding. L-cysteinyl-5'-AMP-binding positions include 44–47, threonine 59, and 82–84; these read CGIT and NIT. The short motif at 46 to 56 is the 'HIGH' region element; sequence ITPYDSTHLGH. The short motif at 188–193 is the 'ERGGDP' region element; it reads ERGGDP. Tryptophan 228 contacts L-cysteinyl-5'-AMP. Cysteine 232 is a binding site for Zn(2+). Residue 250 to 252 coordinates L-cysteinyl-5'-AMP; the sequence is GSD. Position 257 (histidine 257) interacts with Zn(2+). Isoleucine 284 is a binding site for L-cysteinyl-5'-AMP. Residues 290-294 carry the 'KMSKS' region motif; that stretch reads KMSKS.

The protein belongs to the class-I aminoacyl-tRNA synthetase family. MshC subfamily. As to quaternary structure, monomer. Requires Zn(2+) as cofactor.

It carries out the reaction 1D-myo-inositol 2-amino-2-deoxy-alpha-D-glucopyranoside + L-cysteine + ATP = 1D-myo-inositol 2-(L-cysteinylamino)-2-deoxy-alpha-D-glucopyranoside + AMP + diphosphate + H(+). Its function is as follows. Catalyzes the ATP-dependent condensation of GlcN-Ins and L-cysteine to form L-Cys-GlcN-Ins. The polypeptide is L-cysteine:1D-myo-inositol 2-amino-2-deoxy-alpha-D-glucopyranoside ligase (Corynebacterium aurimucosum (strain ATCC 700975 / DSM 44827 / CIP 107346 / CN-1) (Corynebacterium nigricans)).